The primary structure comprises 137 residues: MLQPKRTKFRKMQKGRIRGEAKGGSDLTFGTYGLKALQPERVTARQIEAARRAMTRHMKRQGRVWIRIFPDTPVTSKPVEVRMGKGKGSVDFWACKVKPGRVMFEIDGVSEPIAREALRLAAMKLPVKTRTVVREDW.

Residues 1–16 (MLQPKRTKFRKMQKGR) are compositionally biased toward basic residues. The disordered stretch occupies residues 1–22 (MLQPKRTKFRKMQKGRIRGEAK).

The protein belongs to the universal ribosomal protein uL16 family. As to quaternary structure, part of the 50S ribosomal subunit.

Its function is as follows. Binds 23S rRNA and is also seen to make contacts with the A and possibly P site tRNAs. The protein is Large ribosomal subunit protein uL16 of Jannaschia sp. (strain CCS1).